A 432-amino-acid polypeptide reads, in one-letter code: MYERRHERGMCDRAVEMTDVGATAAPTGPIARGSVARVGAATALAVACVYTVIYLAARDLPPACFSIFAVFWGALGIATGATHGLLQETTREVRWVRSTQIVAGHRTHPLRVAGMIGTVAAVVIAGSSPLWSRQLFVEGRWLSVGLLSVGVAGFCAQATLLGALAGVDRWTQYGSLMVTDAVIRLAVAAAAVVIGWGLAGYLWAATAGAVAWLLMLMASPTARSAASLLTPGGIATFVRGAAHSITAAGASAILVMGFPVLLKVTSDQLGAKGGAVILAVTLTRAPLLVPLSAMQGNLIAHFVDRRTQRLRALIAPALVVGGIGAVGMLAAGLTGPWLLRVGFGPDYQTGGALLAWLTAAAVAIAMLTLTGAAAVAAALHRAYLLGWVSATVASTLLLLLPMPLETRTVIALLFGPTVGIAIHVAALARRPD.

The next 12 membrane-spanning stretches (helical) occupy residues 35-55 (VARV…VIYL), 60-80 (LPPA…IATG), 112-132 (VAGM…PLWS), 144-164 (VGLL…LGAL), 185-205 (LAVA…LWAA), 209-229 (AVAW…ASLL), 242-262 (AHSI…PVLL), 274-294 (GAVI…LSAM), 313-333 (LIAP…AAGL), 359-379 (AAAV…AAAL), 384-404 (LLGW…PMPL), and 408-428 (TVIA…AALA).

The protein to M.tuberculosis Rv3630 and M.bovis Mb3654.

The protein resides in the cell membrane. This is an uncharacterized protein from Mycobacterium tuberculosis (strain CDC 1551 / Oshkosh).